A 367-amino-acid polypeptide reads, in one-letter code: Peptide chain release factor 2 (367 aa).

Gln254 carries the post-translational modification N5-methylglutamine.

It belongs to the prokaryotic/mitochondrial release factor family. In terms of processing, methylated by PrmC. Methylation increases the termination efficiency of RF2.

The protein resides in the cytoplasm. Its function is as follows. Peptide chain release factor 2 directs the termination of translation in response to the peptide chain termination codons UGA and UAA. This Bordetella bronchiseptica (strain ATCC BAA-588 / NCTC 13252 / RB50) (Alcaligenes bronchisepticus) protein is Peptide chain release factor 2.